A 64-amino-acid chain; its full sequence is DNA-directed RNA polymerase subunit Rpo10 (64 aa).

Positions 7, 10, 45, and 46 each coordinate Zn(2+).

This sequence belongs to the archaeal Rpo10/eukaryotic RPB10 RNA polymerase subunit family. As to quaternary structure, part of the RNA polymerase complex. Zn(2+) serves as cofactor.

The protein resides in the cytoplasm. The enzyme catalyses RNA(n) + a ribonucleoside 5'-triphosphate = RNA(n+1) + diphosphate. DNA-dependent RNA polymerase (RNAP) catalyzes the transcription of DNA into RNA using the four ribonucleoside triphosphates as substrates. The protein is DNA-directed RNA polymerase subunit Rpo10 of Halorubrum lacusprofundi (strain ATCC 49239 / DSM 5036 / JCM 8891 / ACAM 34).